We begin with the raw amino-acid sequence, 223 residues long: 7-carboxy-7-deazaguanine synthase (223 aa).

Residues L12 to G14 and R27 contribute to the substrate site. One can recognise a Radical SAM core domain in the interval F18 to A223. Residues C31, C35, and C38 each coordinate [4Fe-4S] cluster. T40 contributes to the Mg(2+) binding site. T92 contacts substrate. S-adenosyl-L-methionine-binding positions include G94 and S136–K138.

Belongs to the radical SAM superfamily. 7-carboxy-7-deazaguanine synthase family. Homodimer. Requires [4Fe-4S] cluster as cofactor. S-adenosyl-L-methionine serves as cofactor. The cofactor is Mg(2+).

It carries out the reaction 6-carboxy-5,6,7,8-tetrahydropterin + H(+) = 7-carboxy-7-deazaguanine + NH4(+). It functions in the pathway purine metabolism; 7-cyano-7-deazaguanine biosynthesis. Catalyzes the complex heterocyclic radical-mediated conversion of 6-carboxy-5,6,7,8-tetrahydropterin (CPH4) to 7-carboxy-7-deazaguanine (CDG), a step common to the biosynthetic pathways of all 7-deazapurine-containing compounds. This is 7-carboxy-7-deazaguanine synthase from Escherichia coli (strain K12).